Reading from the N-terminus, the 404-residue chain is 1-deoxy-D-xylulose 5-phosphate reductoisomerase (404 aa).

Thr5, Gly6, Ser7, Ile8, Gly31, Arg32, Asn33, and Asn121 together coordinate NADPH. Lys122 contributes to the 1-deoxy-D-xylulose 5-phosphate binding site. Glu123 lines the NADPH pocket. Asp147 is a binding site for Mn(2+). Residues Ser148, Glu149, Ser185, and His208 each contribute to the 1-deoxy-D-xylulose 5-phosphate site. Glu149 is a binding site for Mn(2+). Position 214 (Gly214) interacts with NADPH. 4 residues coordinate 1-deoxy-D-xylulose 5-phosphate: Ser221, Asn226, Lys227, and Glu230. Glu230 contributes to the Mn(2+) binding site.

It belongs to the DXR family. Mg(2+) serves as cofactor. The cofactor is Mn(2+).

The catalysed reaction is 2-C-methyl-D-erythritol 4-phosphate + NADP(+) = 1-deoxy-D-xylulose 5-phosphate + NADPH + H(+). It participates in isoprenoid biosynthesis; isopentenyl diphosphate biosynthesis via DXP pathway; isopentenyl diphosphate from 1-deoxy-D-xylulose 5-phosphate: step 1/6. Its function is as follows. Catalyzes the NADPH-dependent rearrangement and reduction of 1-deoxy-D-xylulose-5-phosphate (DXP) to 2-C-methyl-D-erythritol 4-phosphate (MEP). In Prochlorococcus marinus subsp. pastoris (strain CCMP1986 / NIES-2087 / MED4), this protein is 1-deoxy-D-xylulose 5-phosphate reductoisomerase.